The chain runs to 158 residues: Endoribonuclease YbeY (158 aa).

3 residues coordinate Zn(2+): His-119, His-123, and Asp-129.

The protein belongs to the endoribonuclease YbeY family. It depends on Zn(2+) as a cofactor.

Its subcellular location is the cytoplasm. Single strand-specific metallo-endoribonuclease involved in late-stage 70S ribosome quality control and in maturation of the 3' terminus of the 16S rRNA. The protein is Endoribonuclease YbeY of Chlamydia felis (strain Fe/C-56) (Chlamydophila felis).